The sequence spans 492 residues: Endoglucanase 15 (492 aa).

A signal peptide spans 1–30; sequence MSCISSQCFITIKSICIVLLLSITCGAVSA. The active-site Nucleophile is the Asp86. Active-site residues include His414, Asp466, and Glu475.

This sequence belongs to the glycosyl hydrolase 9 (cellulase E) family.

It localises to the secreted. It carries out the reaction Endohydrolysis of (1-&gt;4)-beta-D-glucosidic linkages in cellulose, lichenin and cereal beta-D-glucans.. In Arabidopsis thaliana (Mouse-ear cress), this protein is Endoglucanase 15.